Consider the following 291-residue polypeptide: Presqualene diphosphate synthase (291 aa).

A disordered region spans residues 1 to 23; it reads MTSAMKKIQPEAFSEKSSDSQAS.

The protein belongs to the phytoene/squalene synthase family. HpnD subfamily.

The catalysed reaction is 2 (2E,6E)-farnesyl diphosphate = presqualene diphosphate + diphosphate. It functions in the pathway secondary metabolite biosynthesis; hopanoid biosynthesis. Involved in the biosynthesis of the hopanoid precursor squalene (SQ) from farnesyl diphosphate (FPP). Catalyzes the first step, the formation of presqualene diphosphate (PSPP) from two molecules of FPP. The polypeptide is Presqualene diphosphate synthase (Zymomonas mobilis subsp. mobilis (strain ATCC 31821 / ZM4 / CP4)).